Here is a 190-residue protein sequence, read N- to C-terminus: ATP synthase subunit delta (190 aa).

It belongs to the ATPase delta chain family. In terms of assembly, F-type ATPases have 2 components, F(1) - the catalytic core - and F(0) - the membrane proton channel. F(1) has five subunits: alpha(3), beta(3), gamma(1), delta(1), epsilon(1). F(0) has three main subunits: a(1), b(2) and c(10-14). The alpha and beta chains form an alternating ring which encloses part of the gamma chain. F(1) is attached to F(0) by a central stalk formed by the gamma and epsilon chains, while a peripheral stalk is formed by the delta and b chains.

It localises to the cell inner membrane. Its function is as follows. F(1)F(0) ATP synthase produces ATP from ADP in the presence of a proton or sodium gradient. F-type ATPases consist of two structural domains, F(1) containing the extramembraneous catalytic core and F(0) containing the membrane proton channel, linked together by a central stalk and a peripheral stalk. During catalysis, ATP synthesis in the catalytic domain of F(1) is coupled via a rotary mechanism of the central stalk subunits to proton translocation. Functionally, this protein is part of the stalk that links CF(0) to CF(1). It either transmits conformational changes from CF(0) to CF(1) or is implicated in proton conduction. This is ATP synthase subunit delta from Petrotoga mobilis (strain DSM 10674 / SJ95).